Reading from the N-terminus, the 513-residue chain is MEISVASVTVSVVIAVVTWWVWRTLKWVWFQPKMLESYLRRQGLSGTPYTPLVGDLKRNSKMLTEAISKPIRLNDDITQRVVPYPLQMLKTYGRTHFTWLGPIPAITIMDPELIKEVFNRVYDFQKARLFPLARLIATGLVRYDGDKWAKHRKIINPAFHLEKLKNMVPAFHQCCSEVVGAWDKLVSDKRSSCEVDVWPGLVSMTADMISRTAFGSSYKEGQRIFELQEEIKELLIQSLGKAFIPGYHYLPTKGNRRMKAADREIKVILRGIVNKRLRAREAGEAPSEDLLGILLESNLGQAKGNGMSIEDVMEECKLFYLAGQETTSVLLVWTMVMLSQHQDWQARAREEVKQVFGDKEPNTEGLNQLKVMTMILYEVLRLYPPVTQLPRAIHKEMKLGDMTLPAGVHINLPIMLVQRDTELWGNDAAEFKPERFKDGLSKAAKNQVSFFSFAWGPRICIGQNFALMEAKMAMALILQRFSLELSPSYVHAPYSVITLHPQFGAHLILHKLY.

A helical membrane pass occupies residues glutamate 2–tryptophan 22. Cysteine 460 serves as a coordination point for heme.

It belongs to the cytochrome P450 family. It depends on heme as a cofactor.

It localises to the membrane. It catalyses the reaction oleanolate + reduced [NADPH--hemoprotein reductase] + O2 = hederagenin + oxidized [NADPH--hemoprotein reductase] + H2O + H(+). Catalyzes the oxidation of oleanolate at the C-23 position to form hederagenin. This is Cytochrome P450 72A552 from Barbarea vulgaris (Yellow rocket).